A 459-amino-acid polypeptide reads, in one-letter code: Nuclear distribution protein PAC1-2 (459 aa).

Positions 56-83 (TSIVRLQKKIMDLESRNAALQTELANLT) form a coiled coil. WD repeat units lie at residues 108 to 149 (SHRD…RTVK), 151 to 191 (HTRA…KNIR), 195 to 244 (GHDH…KTLR), 246 to 284 (HTAW…SDHK), 306 to 348 (QYLA…LGTL), 350 to 389 (GHDN…KCVK), 394 to 438 (AHER…DTPD), and 440 to 459 (QVRC…VFAD).

The protein belongs to the WD repeat LIS1/nudF family. In terms of assembly, self-associates. Interacts with NDL1 and dynein.

It is found in the cytoplasm. The protein localises to the cytoskeleton. Its subcellular location is the spindle pole. Functionally, positively regulates the activity of the minus-end directed microtubule motor protein dynein. May enhance dynein-mediated microtubule sliding by targeting dynein to the microtubule plus end. Required for nuclear migration during vegetative growth as well as development. Required for retrograde early endosome (EE) transport from the hyphal tip. Required for localization of dynein to the mitotic spindle poles. Recruits additional proteins to the dynein complex at SPBs. The protein is Nuclear distribution protein PAC1-2 of Uncinocarpus reesii (strain UAMH 1704).